We begin with the raw amino-acid sequence, 650 residues long: Probable potassium transport system protein Kup 1 (650 aa).

Transmembrane regions (helical) follow at residues 12-32 (GLLI…LYVM), 54-74 (ISLV…IIAL), 97-117 (WLVL…TLTP), 139-159 (VSSQ…LFSI), 170-190 (AFGP…LINM), 216-236 (AGIF…ALYS), 249-269 (SWPF…VWIL), 295-315 (LAAI…LITG), 344-364 (IYIP…VLYF), 375-395 (GLSI…WLAM), 400-420 (PVWN…FMIS), and 428-448 (GGYV…VWYY).

It belongs to the HAK/KUP transporter (TC 2.A.72) family.

The protein localises to the cell membrane. It carries out the reaction K(+)(in) + H(+)(in) = K(+)(out) + H(+)(out). Functionally, transport of potassium into the cell. Likely operates as a K(+):H(+) symporter. The protein is Probable potassium transport system protein Kup 1 of Lactobacillus acidophilus (strain ATCC 700396 / NCK56 / N2 / NCFM).